Consider the following 743-residue polypeptide: Dolichyl-phosphate-mannose--protein mannosyltransferase 5 (743 aa).

The Lumenal segment spans residues 1–46 (MNKEHLLKVDPIPDVTIKRGPLRSFLITKPCDNLSSLRTVTSSKEK). N33 carries N-linked (GlcNAc...) asparagine glycosylation. Residues 47–67 (LLVGCLLIFTAIVRLHNISLP) form a helical membrane-spanning segment. The Cytoplasmic segment spans residues 68–129 (NSVVFGENEV…IGTEYTANVP (62 aa)). The helical transmembrane segment at 130–150 (YVAMRFFSATLGIVSVLVLYL) threads the bilayer. Residues 151 to 158 (TLRVSGVK) lie on the Lumenal side of the membrane. Residues 159–179 (IAVAAICAVCFAIENSFVTLS) traverse the membrane as a helical segment. Position 180 (R180) is a topological domain, cytoplasmic. Residues 181-201 (FTLIEGPFVFFMACAVYFFRR) traverse the membrane as a helical segment. Residues 202-231 (SELYLPNSCKANKSLLAASIALGFAVSSKW) lie on the Lumenal side of the membrane. N-linked (GlcNAc...) asparagine glycosylation occurs at N213. A helical transmembrane segment spans residues 232-252 (AGLFTIAWAGIIVLWRVWFMI). The Cytoplasmic portion of the chain corresponds to 253-264 (GDLSRPIGSSIK). Residues 265–285 (YMAFQFTCLLAIPAFIYFLIF) form a helical membrane-spanning segment. Residues 286 to 583 (SVHIKTLNVN…GREVYFLGNA (298 aa)) lie on the Lumenal side of the membrane. One can recognise an MIR 1 domain in the interval 320 to 374 (VAEVAVGSAVSLNHVGTAGGYLHSHLHNYPAGSMQQQVTLYPHIDQNNKWIIELA). N380 and N386 each carry an N-linked (GlcNAc...) asparagine glycan. MIR domains lie at 384-444 (FQNL…IEID) and 454-510 (QEHI…IEEN). The helical transmembrane segment at 584–604 (VLWWSVTAFICTFIIGVAVEL) threads the bilayer. Topologically, residues 605–623 (LAWKLGVNILRDKHIINFH) are cytoplasmic. The chain crosses the membrane as a helical span at residues 624–644 (YQVFQYLLGFAAHYFPYFFVG). At 645 to 646 (QK) the chain is on the lumenal side. Residues 647–667 (LFLYDYLPAYYFGILAFGHAL) form a helical membrane-spanning segment. Topologically, residues 668 to 683 (DLISTYISNKRNNTGY) are cytoplasmic. A helical transmembrane segment spans residues 684-704 (IVVAIFMVVCFYFFSEHSPLI). At 705–743 (YATGWSSNLCKRSKWLGSWDFYCNSLLLSDSHYELNAES) the chain is on the lumenal side.

Belongs to the glycosyltransferase 39 family. PMT3 and PMT5 form a functional heterodimer. Also forms a minor complex with PMT2.

Its subcellular location is the endoplasmic reticulum membrane. The enzyme catalyses a di-trans,poly-cis-dolichyl beta-D-mannosyl phosphate + L-seryl-[protein] = 3-O-(alpha-D-mannosyl)-L-seryl-[protein] + a di-trans,poly-cis-dolichyl phosphate + H(+). It carries out the reaction a di-trans,poly-cis-dolichyl beta-D-mannosyl phosphate + L-threonyl-[protein] = 3-O-(alpha-D-mannosyl)-L-threonyl-[protein] + a di-trans,poly-cis-dolichyl phosphate + H(+). The protein operates within protein modification; protein glycosylation. Its function is as follows. Protein O-mannosyltransferase involved in O-glycosylation which is essential for cell wall rigidity. Forms a heterodimeric complex with PMT3 and more rarely with PMT2 to transfer mannose from Dol-P-mannose to Ser or Thr residues on proteins. This Saccharomyces cerevisiae (strain ATCC 204508 / S288c) (Baker's yeast) protein is Dolichyl-phosphate-mannose--protein mannosyltransferase 5.